A 273-amino-acid polypeptide reads, in one-letter code: Bis(5'-nucleosyl)-tetraphosphatase, symmetrical (273 aa).

It belongs to the Ap4A hydrolase family.

The catalysed reaction is P(1),P(4)-bis(5'-adenosyl) tetraphosphate + H2O = 2 ADP + 2 H(+). Hydrolyzes diadenosine 5',5'''-P1,P4-tetraphosphate to yield ADP. This Histophilus somni (strain 2336) (Haemophilus somnus) protein is Bis(5'-nucleosyl)-tetraphosphatase, symmetrical.